A 367-amino-acid chain; its full sequence is 4-hydroxyphenylpyruvate dioxygenase (367 aa).

VOC domains are found at residues 3–135 and 166–324; these read GFDH…FVDR and LIDH…IFTN. Fe cation-binding residues include His-169, His-252, and Glu-335.

The protein belongs to the 4HPPD family. Fe cation is required as a cofactor.

The catalysed reaction is 3-(4-hydroxyphenyl)pyruvate + O2 = homogentisate + CO2. The protein operates within amino-acid degradation; L-phenylalanine degradation; acetoacetate and fumarate from L-phenylalanine: step 3/6. Its function is as follows. Key enzyme in the degradation of tyrosine. The polypeptide is 4-hydroxyphenylpyruvate dioxygenase (hpd) (Dictyostelium discoideum (Social amoeba)).